A 585-amino-acid chain; its full sequence is A-type ATP synthase subunit A (585 aa).

Position 237–244 (237–244) interacts with ATP; the sequence is GPFGSGKT.

This sequence belongs to the ATPase alpha/beta chains family. In terms of assembly, has multiple subunits with at least A(3), B(3), C, D, E, F, H, I and proteolipid K(x).

The protein localises to the cell membrane. It carries out the reaction ATP + H2O + 4 H(+)(in) = ADP + phosphate + 5 H(+)(out). Functionally, component of the A-type ATP synthase that produces ATP from ADP in the presence of a proton gradient across the membrane. The A chain is the catalytic subunit. The protein is A-type ATP synthase subunit A of Natronomonas pharaonis (strain ATCC 35678 / DSM 2160 / CIP 103997 / JCM 8858 / NBRC 14720 / NCIMB 2260 / Gabara) (Halobacterium pharaonis).